The sequence spans 158 residues: Lipoprotein signal peptidase (158 aa).

The next 4 membrane-spanning stretches (helical) occupy residues 7–27, 38–58, 67–87, and 95–115; these read LFWIAAFIAFFVDQLTKYWVV, ILPGIFHFTYVTNTGAAFSLF, WLSLGVSLLLIGLALLGPVLD, and GLILGGAMGNGIDRFALGYVV. Active-site residues include Asp116 and Asp132. Residues 125-145 traverse the membrane as a helical segment; the sequence is FAVFNMADSFISIGIVCLLLA.

Belongs to the peptidase A8 family.

It is found in the cell inner membrane. The catalysed reaction is Release of signal peptides from bacterial membrane prolipoproteins. Hydrolyzes -Xaa-Yaa-Zaa-|-(S,diacylglyceryl)Cys-, in which Xaa is hydrophobic (preferably Leu), and Yaa (Ala or Ser) and Zaa (Gly or Ala) have small, neutral side chains.. It participates in protein modification; lipoprotein biosynthesis (signal peptide cleavage). Its function is as follows. This protein specifically catalyzes the removal of signal peptides from prolipoproteins. The polypeptide is Lipoprotein signal peptidase (Nostoc sp. (strain PCC 7120 / SAG 25.82 / UTEX 2576)).